A 608-amino-acid polypeptide reads, in one-letter code: Dextranase (608 aa).

The signal sequence occupies residues 1-19; the sequence is MATMLKLLALTLAISESAI. Residues 20–34 constitute a propeptide that is removed on maturation; it reads GAVMHPPGNSHPGTH. Residues asparagine 39, asparagine 571, and asparagine 574 are each glycosylated (N-linked (GlcNAc...) asparagine).

Belongs to the glycosyl hydrolase 49 family. Post-translationally, N-glycosylated.

It localises to the secreted. The catalysed reaction is Endohydrolysis of (1-&gt;6)-alpha-D-glucosidic linkages in dextran.. In Talaromyces minioluteus (Filamentous fungus), this protein is Dextranase (DEX).